The primary structure comprises 160 residues: Periplasmic nitrate reductase, electron transfer subunit (160 aa).

Positions 1–25 (MKTRIIFAALALAAAMPLLVSGVFA) are cleaved as a signal peptide. Heme c contacts are provided by His73, Cys87, Cys90, His91, His108, Cys127, Cys130, and His131.

It belongs to the NapB family. In terms of assembly, component of the periplasmic nitrate reductase NapAB complex composed of NapA and NapB. Post-translationally, binds 2 heme C groups per subunit.

It localises to the periplasm. Its function is as follows. Electron transfer subunit of the periplasmic nitrate reductase complex NapAB. Receives electrons from the membrane-anchored tetraheme c-type NapC protein and transfers these to NapA subunit, thus allowing electron flow between membrane and periplasm. Essential for periplasmic nitrate reduction with nitrate as the terminal electron acceptor. In Azospirillum brasilense, this protein is Periplasmic nitrate reductase, electron transfer subunit.